Reading from the N-terminus, the 226-residue chain is 6-deoxy-6-sulfo-D-fructose transaldolase (226 aa).

The active-site Schiff-base intermediate with substrate is K89.

It belongs to the transaldolase family.

The catalysed reaction is 6-deoxy-6-sulfo-D-fructose + D-glyceraldehyde 3-phosphate = D-fructose 6-phosphate + (2S)-3-sulfolactaldehyde. It carries out the reaction 6-deoxy-6-sulfo-D-fructose + D-erythrose 4-phosphate = (2S)-3-sulfolactaldehyde + D-sedoheptulose 7-phosphate. Part of the sulfo-TAL (or sulfo-SFT) pathway, a D-sulfoquinovose degradation pathway that produces sulfolactate (SL). Catalyzes the conversion of 6-deoxy-6-sulfo-D-fructose (SF) and glyceraldehyde 3-phosphate (GAP) into fructose-6-phosphate (F6P) and 3-sulfolactaldehyde (SLA). Can also catalyze the SF-cleavage with erythrose 4-phosphate (E4P) as acceptor, forming 3-sulfolactaldehyde (SLA) and sedoheptulose 7-phosphate (S7P). The protein is 6-deoxy-6-sulfo-D-fructose transaldolase of Priestia aryabhattai (Bacillus aryabhattai).